Here is a 188-residue protein sequence, read N- to C-terminus: Protein CRIPTO3 (188 aa).

The region spanning 78–107 (LNRTCCLNGGTCMLESFCACPPSFYGRNCE) is the EGF-like domain. An N-linked (GlcNAc...) asparagine glycan is attached at Asn79. Cystine bridges form between Cys82/Cys89, Cys83/Cys95, Cys97/Cys106, Cys115/Cys133, Cys128/Cys149, and Cys131/Cys140.

The protein belongs to the EGF-CFC (Cripto-1/FRL1/Cryptic) family. In terms of tissue distribution, expressed weakly in lung, colon and breast. Expressed also strongly in primary cancer tissues; lung and colon cancers.

The protein resides in the cell membrane. Functionally, could play a role in the determination of the epiblastic cells that subsequently give rise to the mesoderm. Activates the Nodal-dependent signaling pathway. This is Protein CRIPTO3 from Homo sapiens (Human).